We begin with the raw amino-acid sequence, 81 residues long: ATP synthase subunit c (81 aa).

The next 2 helical transmembrane spans lie at 7 to 27 (AASV…PGIG) and 57 to 77 (LAFM…LLFA).

This sequence belongs to the ATPase C chain family. F-type ATPases have 2 components, F(1) - the catalytic core - and F(0) - the membrane proton channel. F(1) has five subunits: alpha(3), beta(3), gamma(1), delta(1), epsilon(1). F(0) has four main subunits: a(1), b(1), b'(1) and c(10-14). The alpha and beta chains form an alternating ring which encloses part of the gamma chain. F(1) is attached to F(0) by a central stalk formed by the gamma and epsilon chains, while a peripheral stalk is formed by the delta, b and b' chains.

The protein localises to the cellular thylakoid membrane. In terms of biological role, f(1)F(0) ATP synthase produces ATP from ADP in the presence of a proton or sodium gradient. F-type ATPases consist of two structural domains, F(1) containing the extramembraneous catalytic core and F(0) containing the membrane proton channel, linked together by a central stalk and a peripheral stalk. During catalysis, ATP synthesis in the catalytic domain of F(1) is coupled via a rotary mechanism of the central stalk subunits to proton translocation. Functionally, key component of the F(0) channel; it plays a direct role in translocation across the membrane. A homomeric c-ring of between 10-14 subunits forms the central stalk rotor element with the F(1) delta and epsilon subunits. This is ATP synthase subunit c from Synechococcus elongatus (strain ATCC 33912 / PCC 7942 / FACHB-805) (Anacystis nidulans R2).